Here is a 366-residue protein sequence, read N- to C-terminus: 3-isopropylmalate dehydrogenase (366 aa).

78-91 (GPQWTHLKGSESPE) lines the NAD(+) pocket. Arginine 99, arginine 109, arginine 138, and aspartate 227 together coordinate substrate. Mg(2+)-binding residues include aspartate 227, aspartate 251, and aspartate 255. 285–297 (GSAPDIAEKNIAN) contributes to the NAD(+) binding site.

It belongs to the isocitrate and isopropylmalate dehydrogenases family. LeuB type 1 subfamily. As to quaternary structure, homodimer. It depends on Mg(2+) as a cofactor. Mn(2+) serves as cofactor.

It is found in the cytoplasm. The catalysed reaction is (2R,3S)-3-isopropylmalate + NAD(+) = 4-methyl-2-oxopentanoate + CO2 + NADH. The protein operates within amino-acid biosynthesis; L-leucine biosynthesis; L-leucine from 3-methyl-2-oxobutanoate: step 3/4. Its function is as follows. Catalyzes the oxidation of 3-carboxy-2-hydroxy-4-methylpentanoate (3-isopropylmalate) to 3-carboxy-4-methyl-2-oxopentanoate. The product decarboxylates to 4-methyl-2 oxopentanoate. The protein is 3-isopropylmalate dehydrogenase of Blochmanniella pennsylvanica (strain BPEN).